The following is a 576-amino-acid chain: Carboxypeptidase S (576 aa).

The Cytoplasmic portion of the chain corresponds to 1-19 (MIALPVEKAPRKSLWQRHR). K8 is covalently cross-linked (Glycyl lysine isopeptide (Lys-Gly) (interchain with G-Cter in ubiquitin)). The chain crosses the membrane as a helical span at residues 20–40 (AFISGIVALIIIGTFFLTSGL). At 41–576 (HPAPPHEAKR…EYIVNVNEYA (536 aa)) the chain is on the lumenal side. The interval 44–65 (PPHEAKRPHHGKGPMHSPKCEK) is disordered. The N-linked (GlcNAc...) asparagine glycan is linked to N88. H168 provides a ligand contact to Zn(2+). The active site involves D170. Residue N176 is glycosylated (N-linked (GlcNAc...) asparagine). Position 205 (D205) interacts with Zn(2+). N-linked (GlcNAc...) asparagine glycosylation is present at N228. Residue E239 is the Proton acceptor of the active site. Zn(2+)-binding residues include E240 and D268. N381 and N525 each carry an N-linked (GlcNAc...) asparagine glycan. H547 serves as a coordination point for Zn(2+).

It belongs to the peptidase M20A family. YscS is synthesized as one polypeptide chain precursor which after carbohydrate modification in the secretory pathway yields two active precursor molecules. The proteolytically unprocessed forms are associated with the membrane, whereas the mature forms of the enzyme are soluble. Zn(2+) is required as a cofactor. Post-translationally, glycosylated. Ubiquitinated. Ubiquitination mediates sorting into internal vesicles in late endosomes. TUL1 is required for ubiquitination.

It localises to the vacuole membrane. It carries out the reaction Release of a C-terminal amino acid from a peptide in which glycine is the penultimate amino acid, e.g. Z-Gly-|-Leu.. Functionally, necessary for use of certain peptides as sole nitrogen source. May also cleave intracellularly generated peptides to recycle amino acids for protein synthesis. The protein is Carboxypeptidase S (CPS1) of Saccharomyces cerevisiae (strain ATCC 204508 / S288c) (Baker's yeast).